Here is a 45-residue protein sequence, read N- to C-terminus: Photosystem II reaction center protein K (45 aa).

Residues 1 to 8 constitute a propeptide that is removed on maturation; that stretch reads MLMSLFLA. The helical transmembrane segment at 23–43 threads the bilayer; that stretch reads ILPIIPLFFLLLAFVWQAAIG.

This sequence belongs to the PsbK family. PSII is composed of 1 copy each of membrane proteins PsbA, PsbB, PsbC, PsbD, PsbE, PsbF, PsbH, PsbI, PsbJ, PsbK, PsbL, PsbM, PsbT, PsbX, PsbY, PsbZ, Psb30/Ycf12, at least 3 peripheral proteins of the oxygen-evolving complex and a large number of cofactors. It forms dimeric complexes.

Its subcellular location is the plastid. It localises to the cyanelle thylakoid membrane. Its function is as follows. One of the components of the core complex of photosystem II (PSII). PSII is a light-driven water:plastoquinone oxidoreductase that uses light energy to abstract electrons from H(2)O, generating O(2) and a proton gradient subsequently used for ATP formation. It consists of a core antenna complex that captures photons, and an electron transfer chain that converts photonic excitation into a charge separation. The protein is Photosystem II reaction center protein K of Cyanophora paradoxa.